We begin with the raw amino-acid sequence, 190 residues long: Double zinc ribbon protein MJ0416 (190 aa).

The DZANK-type zinc finger occupies 134-183; the sequence is CPNCNNYISDSWKYCAHCGAKLKEEEEEVLRCPNCKRPVQPEWIVCPYCG.

The sequence is that of Double zinc ribbon protein MJ0416 from Methanocaldococcus jannaschii (strain ATCC 43067 / DSM 2661 / JAL-1 / JCM 10045 / NBRC 100440) (Methanococcus jannaschii).